A 134-amino-acid chain; its full sequence is FK506-binding protein 2 (134 aa).

Residues 1–19 (MRFSIFSTLLVSLATLSTA) form the signal peptide. Residues 39-127 (GDTVQMHYKG…IFETELVGID (89 aa)) form the PPIase FKBP-type domain. The Prevents secretion from ER signature appears at 131–134 (KDEL).

The protein belongs to the FKBP-type PPIase family. FKBP2 subfamily.

It localises to the endoplasmic reticulum. It carries out the reaction [protein]-peptidylproline (omega=180) = [protein]-peptidylproline (omega=0). With respect to regulation, inhibited by both FK506 and rapamycin. PPIases accelerate the folding of proteins. It catalyzes the cis-trans isomerization of proline imidic peptide bonds in oligopeptides. This chain is FK506-binding protein 2 (fpr2), found in Aspergillus oryzae (strain ATCC 42149 / RIB 40) (Yellow koji mold).